We begin with the raw amino-acid sequence, 573 residues long: Hemagglutinin-neuraminidase (573 aa).

Residues 1–27 (MQDSHGNTQILNQANSMVKRTWRLLFR) are Intravirion-facing. Residues 28–48 (IATLILLVSIFVLSLIIVLQS) form a helical membrane-spanning segment. The Virion surface portion of the chain corresponds to 49–573 (TPGNLQNDIN…DFQITLFLAA (525 aa)). 3 cysteine pairs are disulfide-bonded: cysteine 173–cysteine 197, cysteine 187–cysteine 248, and cysteine 239–cysteine 252. The interval 235-240 (NRKSCS) is involved in neuraminidase activity. 4 N-linked (GlcNAc...) asparagine; by host glycosylation sites follow: asparagine 258, asparagine 330, asparagine 339, and asparagine 347. 3 disulfides stabilise this stretch: cysteine 345-cysteine 466, cysteine 377-cysteine 387, and cysteine 460-cysteine 470. The N-linked (GlcNAc...) asparagine; by host glycan is linked to asparagine 433. Asparagine 502 and asparagine 530 each carry an N-linked (GlcNAc...) asparagine; by host glycan. A disulfide bond links cysteine 540 and cysteine 551.

Belongs to the paramyxoviruses hemagglutinin-neuraminidase family. Homotetramer; composed of disulfide-linked homodimers. Interacts with F protein trimer.

The protein resides in the virion membrane. It localises to the host cell membrane. It catalyses the reaction Hydrolysis of alpha-(2-&gt;3)-, alpha-(2-&gt;6)-, alpha-(2-&gt;8)- glycosidic linkages of terminal sialic acid residues in oligosaccharides, glycoproteins, glycolipids, colominic acid and synthetic substrates.. Functionally, attaches the virus to sialic acid-containing cell receptors and thereby initiating infection. Binding of HN protein to the receptor induces a conformational change that allows the F protein to trigger virion/cell membranes fusion. Its function is as follows. Neuraminidase activity ensures the efficient spread of the virus by dissociating the mature virions from the neuraminic acid containing glycoproteins. The sequence is that of Hemagglutinin-neuraminidase (HN) from Homo sapiens (Human).